The primary structure comprises 272 residues: Phosphoribosylformylglycinamidine synthase subunit PurQ (272 aa).

The 265-residue stretch at 8–272 (VLVMSGYGIN…FKNAVEYFNK (265 aa)) folds into the Glutamine amidotransferase type-1 domain. C98 serves as the catalytic Nucleophile. Residues H225, E227, and E235 contribute to the active site.

As to quaternary structure, part of the FGAM synthase complex composed of 1 PurL, 1 PurQ and 2 PurS subunits.

The protein resides in the cytoplasm. The enzyme catalyses N(2)-formyl-N(1)-(5-phospho-beta-D-ribosyl)glycinamide + L-glutamine + ATP + H2O = 2-formamido-N(1)-(5-O-phospho-beta-D-ribosyl)acetamidine + L-glutamate + ADP + phosphate + H(+). It catalyses the reaction L-glutamine + H2O = L-glutamate + NH4(+). It functions in the pathway purine metabolism; IMP biosynthesis via de novo pathway; 5-amino-1-(5-phospho-D-ribosyl)imidazole from N(2)-formyl-N(1)-(5-phospho-D-ribosyl)glycinamide: step 1/2. Functionally, part of the phosphoribosylformylglycinamidine synthase complex involved in the purines biosynthetic pathway. Catalyzes the ATP-dependent conversion of formylglycinamide ribonucleotide (FGAR) and glutamine to yield formylglycinamidine ribonucleotide (FGAM) and glutamate. The FGAM synthase complex is composed of three subunits. PurQ produces an ammonia molecule by converting glutamine to glutamate. PurL transfers the ammonia molecule to FGAR to form FGAM in an ATP-dependent manner. PurS interacts with PurQ and PurL and is thought to assist in the transfer of the ammonia molecule from PurQ to PurL. This Methanococcus maripaludis (strain DSM 14266 / JCM 13030 / NBRC 101832 / S2 / LL) protein is Phosphoribosylformylglycinamidine synthase subunit PurQ.